Consider the following 61-residue polypeptide: Protein translocase subunit SecE (61 aa).

Residues 38-58 traverse the membrane as a helical segment; it reads GIGMILIGLIGLVIRMIGYLI.

It belongs to the SecE/SEC61-gamma family. As to quaternary structure, component of the Sec protein translocase complex. Heterotrimer consisting of SecY (alpha), SecG (beta) and SecE (gamma) subunits. The heterotrimers can form oligomers, although 1 heterotrimer is thought to be able to translocate proteins. Interacts with the ribosome. May interact with SecDF, and other proteins may be involved.

The protein localises to the cell membrane. Essential subunit of the Sec protein translocation channel SecYEG. Clamps together the 2 halves of SecY. May contact the channel plug during translocation. The sequence is that of Protein translocase subunit SecE from Thermococcus onnurineus (strain NA1).